The chain runs to 283 residues: Acetylglutamate kinase (283 aa).

Substrate-binding positions include 64–65 (GG), arginine 86, and asparagine 178.

The protein belongs to the acetylglutamate kinase family. ArgB subfamily.

It localises to the cytoplasm. It carries out the reaction N-acetyl-L-glutamate + ATP = N-acetyl-L-glutamyl 5-phosphate + ADP. The protein operates within amino-acid biosynthesis; L-arginine biosynthesis; N(2)-acetyl-L-ornithine from L-glutamate: step 2/4. Catalyzes the ATP-dependent phosphorylation of N-acetyl-L-glutamate. This Lactococcus lactis subsp. lactis (strain IL1403) (Streptococcus lactis) protein is Acetylglutamate kinase.